We begin with the raw amino-acid sequence, 626 residues long: Chaperone protein HtpG (626 aa).

Residues 1–331 (MSETVERHEF…TDDLPLNVSR (331 aa)) are a; substrate-binding. Positions 332 to 544 (EMLQSTPTLQ…GMGPDLQMQR (213 aa)) are b. Residues 545-626 (LLRRAGRGFG…GTAAKPAGSA (82 aa)) form a c region.

This sequence belongs to the heat shock protein 90 family. Homodimer.

The protein resides in the cytoplasm. Functionally, molecular chaperone. Has ATPase activity. In Methylorubrum extorquens (strain CM4 / NCIMB 13688) (Methylobacterium extorquens), this protein is Chaperone protein HtpG.